A 150-amino-acid polypeptide reads, in one-letter code: UPF0208 membrane protein VIBHAR_02941 (150 aa).

2 helical membrane passes run 42 to 62 (FGIK…MAFN) and 70 to 90 (AIVV…WLGS).

Belongs to the UPF0208 family.

It localises to the cell inner membrane. The protein is UPF0208 membrane protein VIBHAR_02941 of Vibrio campbellii (strain ATCC BAA-1116).